The primary structure comprises 1372 residues: DNA-directed RNA polymerase subunit beta' (1372 aa).

Residues cysteine 69, cysteine 71, cysteine 84, and cysteine 87 each coordinate Zn(2+). 3 residues coordinate Mg(2+): aspartate 460, aspartate 462, and aspartate 464. Residues cysteine 808, cysteine 882, cysteine 889, and cysteine 892 each coordinate Zn(2+).

The protein belongs to the RNA polymerase beta' chain family. The RNAP catalytic core consists of 2 alpha, 1 beta, 1 beta' and 1 omega subunit. When a sigma factor is associated with the core the holoenzyme is formed, which can initiate transcription. Requires Mg(2+) as cofactor. Zn(2+) is required as a cofactor.

The enzyme catalyses RNA(n) + a ribonucleoside 5'-triphosphate = RNA(n+1) + diphosphate. DNA-dependent RNA polymerase catalyzes the transcription of DNA into RNA using the four ribonucleoside triphosphates as substrates. The polypeptide is DNA-directed RNA polymerase subunit beta' (Rickettsia typhi (strain ATCC VR-144 / Wilmington)).